A 188-amino-acid polypeptide reads, in one-letter code: PRA1 family protein F4 (188 aa).

Polar residues predominate over residues 1-13 (MANNDEITTSSHA). Residues 1-25 (MANNDEITTSSHASPAVNHESISRA) are disordered. 4 helical membrane passes run 67 to 86 (YFRSNYAIVILNVIFFSLIW), 90 to 107 (SLIVFTGLVFLWIFLYFL), 119 to 139 (IDDRAVLIGLSVITIVLLLLT), and 142 to 162 (TFNIVAALMAGAVLVLIHAVI).

Belongs to the PRA1 family.

The protein resides in the endosome membrane. Its function is as follows. May be involved in both secretory and endocytic intracellular trafficking in the endosomal/prevacuolar compartments. This chain is PRA1 family protein F4 (PRA1F4), found in Arabidopsis thaliana (Mouse-ear cress).